The following is a 1060-amino-acid chain: METLKEEEQFRNFDTPLLNTPHHLKEETQIQQKEREQQQQQQQQLQQQLQLQNERENRNHNITEELNKIPSSNNSSNSSSPNPLSISVSSSLGSASSIHLTPQGTIGNYLVIKTIGRGQFGKVKLGYHKKIPNEKVAIKIINKGKLDPETLKMVQREVRIMKLLHHPNIIRLYEVIETSRALYLIMEYAGEGEVMDFMIAHGVLTESQARTFFTQIVSAINYCHSKRAVHRDLKPENLLLDCNRQIKIIDFGLSNVFTPGSYLKTFCGSPTYASPELILRKEYNGPSVDVWSMGVVLFVLVTGYLPFDGDNYVELFQKILAGNYTIPSYLTHECKSLISRMLVVDPDKRATMEEIINHPWLSSTKQIILSTTMTDSLKNLNSCLEQQINVENLLNQSLNNSNNNNINNINNINNTMATMNNSNNNNNNNNNNNNNNNNNNNNNNNNNNNNNNNNNNNNNNNNNNTTTTTNATTTTPITSPIQNRNNEELDQEIIEELVGLGFEREELCNSIRQNKYNDAASTYFLLQGKKLRESQQNQTDNAKKLEKFYSEPLTIPAHVGENSPLIKYKRHHKRSNTVDSPKSTNTPQYRSSNTQQNNHHHQQQQQQQQQQQQQHHHHTQQQNQQQSQQQYNNNNHNKPPTPTIVTTQASTTVNNHISINNNNNNNNNNNNNNNSSTPGSNTVSSTQSSSINSSVNPSPLCLSNAVPVSLREKLREKEATTTNTTTTTTTTTTTTTNTSSNNSSNQSISSISPPTSTSPNLQPFSLASTANNNNNNNNSNNNSNNNNNNNNNNNNSLNSHIQRRATASSLQQQQQMQQASNTRRLRSNSSSVADQSQRQESRKLEDDWVIFEDYSNDGHRDGQPKNYHLQPSSLSSHKKQKSPVHSFLSSFKNILKRSDDKSFNSSSSNNNTNNNNTTTSVSTNNTPRTLEVDHQNSNNNNQQATSSSPNVTSPSSPSQQQQQEPRIVRFVFGVNTTTMKDAPELMQQVLKVVDTFCIPHTKKAPFLIECETEGVRFSIEICRLPRLSVNGLKFKRIGGSSWRYKSICKDLLSQMKLNSH.

2 stretches are compositionally biased toward basic and acidic residues: residues 1–11 (METLKEEEQFR) and 23–37 (HLKE…EREQ). Disordered regions lie at residues 1 to 52 (METL…LQLQ) and 67 to 88 (NKIP…SISV). Low complexity-rich tracts occupy residues 38–52 (QQQQ…LQLQ) and 68–88 (KIPS…SISV). One can recognise a Protein kinase domain in the interval 109–361 (YLVIKTIGRG…MEEIINHPWL (253 aa)). ATP contacts are provided by residues 115 to 123 (IGRGQFGKV) and K139. Catalysis depends on D232, which acts as the Proton acceptor. A compositionally biased stretch (low complexity) spans 409 to 475 (INNINNTMAT…TTTTNATTTT (67 aa)). Disordered regions lie at residues 409 to 488 (INNI…NNEE), 560 to 701 (GENS…SPLC), 714 to 886 (LREK…PVHS), and 899 to 966 (DDKS…QEPR). One can recognise a UBA domain in the interval 488–528 (ELDQEIIEELVGLGFEREELCNSIRQNKYNDAASTYFLLQG). Residues 577 to 594 (TVDSPKSTNTPQYRSSNT) are compositionally biased toward polar residues. Composition is skewed to low complexity over residues 603–613 (QQQQQQQQQQQ), 620–637 (QQQN…NNHN), 650–699 (STTV…NPSP), and 720–760 (TTTN…TSPN). The segment covering 761-770 (LQPFSLASTA) has biased composition (polar residues). 2 stretches are compositionally biased toward low complexity: residues 771–799 (NNNN…SLNS) and 811–831 (QQQQ…NSSS). The span at 837–846 (QRQESRKLED) shows a compositional bias: basic and acidic residues. Low complexity-rich tracts occupy residues 904-926 (NSSS…TNNT) and 935-965 (QNSN…QQEP). Residues 1008–1057 (IECETEGVRFSIEICRLPRLSVNGLKFKRIGGSSWRYKSICKDLLSQMKL) form the KA1 domain.

It belongs to the protein kinase superfamily. CAMK Ser/Thr protein kinase family. SNF1 subfamily.

It catalyses the reaction L-seryl-[protein] + ATP = O-phospho-L-seryl-[protein] + ADP + H(+). It carries out the reaction L-threonyl-[protein] + ATP = O-phospho-L-threonyl-[protein] + ADP + H(+). The chain is Probable serine/threonine-protein kinase MARK-A (mrkA) from Dictyostelium discoideum (Social amoeba).